The following is a 395-amino-acid chain: S-adenosylmethionine synthase (395 aa).

Residue His14 participates in ATP binding. Position 16 (Asp16) interacts with Mg(2+). Glu42 lines the K(+) pocket. 2 residues coordinate L-methionine: Glu55 and Gln98. The flexible loop stretch occupies residues 98 to 108 (QSPDIALGVDK). ATP-binding positions include 175–177 (DGK), 242–243 (RF), Asp251, 257–258 (RK), Ala274, and Lys278. L-methionine is bound at residue Asp251. Lys282 contributes to the L-methionine binding site.

The protein belongs to the AdoMet synthase family. In terms of assembly, homotetramer; dimer of dimers. Mg(2+) serves as cofactor. It depends on K(+) as a cofactor.

The protein resides in the cytoplasm. It carries out the reaction L-methionine + ATP + H2O = S-adenosyl-L-methionine + phosphate + diphosphate. The protein operates within amino-acid biosynthesis; S-adenosyl-L-methionine biosynthesis; S-adenosyl-L-methionine from L-methionine: step 1/1. Functionally, catalyzes the formation of S-adenosylmethionine (AdoMet) from methionine and ATP. The overall synthetic reaction is composed of two sequential steps, AdoMet formation and the subsequent tripolyphosphate hydrolysis which occurs prior to release of AdoMet from the enzyme. The chain is S-adenosylmethionine synthase from Thermosipho africanus (strain TCF52B).